The following is a 36-amino-acid chain: Photosystem I reaction center subunit VIII (36 aa).

Residues 6 to 28 (LPSIFVPLVGLLFPAIAMVSLFF) traverse the membrane as a helical segment.

Belongs to the PsaI family.

It localises to the plastid. It is found in the chloroplast thylakoid membrane. Its function is as follows. May help in the organization of the PsaL subunit. This chain is Photosystem I reaction center subunit VIII, found in Nymphaea alba (White water-lily).